Consider the following 303-residue polypeptide: N-acetyl-D-glucosamine kinase (303 aa).

Residues 4 to 11 and 133 to 140 contribute to the ATP site; these read GFDIGGTK and GVGGGLIF. The Zn(2+) site is built by His-157, Cys-177, Cys-179, and Cys-184.

The protein belongs to the ROK (NagC/XylR) family. NagK subfamily.

The catalysed reaction is N-acetyl-D-glucosamine + ATP = N-acetyl-D-glucosamine 6-phosphate + ADP + H(+). It participates in cell wall biogenesis; peptidoglycan recycling. Its function is as follows. Catalyzes the phosphorylation of N-acetyl-D-glucosamine (GlcNAc) derived from cell-wall degradation, yielding GlcNAc-6-P. In Escherichia coli O157:H7, this protein is N-acetyl-D-glucosamine kinase.